Reading from the N-terminus, the 619-residue chain is 1-deoxy-D-xylulose-5-phosphate synthase (619 aa).

Residues H80 and G121 to S123 each bind thiamine diphosphate. Mg(2+) is bound at residue D152. Residues G153–A154, N181, Y288, and E370 each bind thiamine diphosphate. N181 serves as a coordination point for Mg(2+).

The protein belongs to the transketolase family. DXPS subfamily. Homodimer. Mg(2+) is required as a cofactor. It depends on thiamine diphosphate as a cofactor.

The catalysed reaction is D-glyceraldehyde 3-phosphate + pyruvate + H(+) = 1-deoxy-D-xylulose 5-phosphate + CO2. The protein operates within metabolic intermediate biosynthesis; 1-deoxy-D-xylulose 5-phosphate biosynthesis; 1-deoxy-D-xylulose 5-phosphate from D-glyceraldehyde 3-phosphate and pyruvate: step 1/1. Catalyzes the acyloin condensation reaction between C atoms 2 and 3 of pyruvate and glyceraldehyde 3-phosphate to yield 1-deoxy-D-xylulose-5-phosphate (DXP). This Yersinia pestis (strain Pestoides F) protein is 1-deoxy-D-xylulose-5-phosphate synthase.